Reading from the N-terminus, the 355-residue chain is Guanine nucleotide-binding protein G(z) subunit alpha (355 aa).

Residues 1-14 show a composition bias toward basic and acidic residues; it reads MGCRQSSEEKEAAR. The segment at 1-26 is disordered; sequence MGCRQSSEEKEAARRSRRIDRHLRSE. A lipid anchor (N-myristoyl glycine) is attached at Gly-2. Cys-3 carries the S-palmitoyl cysteine lipid modification. A G-alpha domain is found at 32–355; the sequence is REIKLLLLGT…QNNLKYIGLC (324 aa). The tract at residues 35–48 is G1 motif; that stretch reads KLLLLGTSNSGKST. Residues 40–47, 176–182, 201–205, 270–273, and Ala-327 contribute to the GTP site; these read GTSNSGKS, LRSRDMT, DVGGQ, and NKKD. Residues Ser-47 and Thr-182 each coordinate Mg(2+). The G2 motif stretch occupies residues 174–182; the sequence is DILRSRDMT. A G3 motif region spans residues 197–206; it reads FKMVDVGGQR. The tract at residues 266–273 is G4 motif; it reads ILFLNKKD. The segment at 325–330 is G5 motif; that stretch reads TCATDT.

It belongs to the G-alpha family. G(i/o/t/z) subfamily. G-proteins are composed of 3 units; alpha, beta and gamma. The alpha chain contains the guanine nucleotide binding site. Interacts with ADGRB2.

The protein localises to the membrane. In terms of biological role, guanine nucleotide-binding proteins (G proteins) are involved as modulators or transducers in various transmembrane signaling systems. The polypeptide is Guanine nucleotide-binding protein G(z) subunit alpha (Gnaz) (Mus musculus (Mouse)).